A 387-amino-acid polypeptide reads, in one-letter code: Formate-dependent phosphoribosylglycinamide formyltransferase (387 aa).

Residues 21 to 22 and glutamate 81 each bind N(1)-(5-phospho-beta-D-ribosyl)glycinamide; that span reads EL. ATP is bound by residues arginine 113, lysine 154, 159–164, 193–196, and glutamate 201; these read SSGHGQ and EEFI. An ATP-grasp domain is found at 118-306; that stretch reads TFAAEEVGVK…EFALHLRAVL (189 aa). Mg(2+)-binding residues include glutamate 265 and glutamate 277. N(1)-(5-phospho-beta-D-ribosyl)glycinamide-binding positions include aspartate 284, lysine 352, and 359 to 360; that span reads RR.

It belongs to the PurK/PurT family. Homodimer.

It catalyses the reaction N(1)-(5-phospho-beta-D-ribosyl)glycinamide + formate + ATP = N(2)-formyl-N(1)-(5-phospho-beta-D-ribosyl)glycinamide + ADP + phosphate + H(+). Its pathway is purine metabolism; IMP biosynthesis via de novo pathway; N(2)-formyl-N(1)-(5-phospho-D-ribosyl)glycinamide from N(1)-(5-phospho-D-ribosyl)glycinamide (formate route): step 1/1. Functionally, involved in the de novo purine biosynthesis. Catalyzes the transfer of formate to 5-phospho-ribosyl-glycinamide (GAR), producing 5-phospho-ribosyl-N-formylglycinamide (FGAR). Formate is provided by PurU via hydrolysis of 10-formyl-tetrahydrofolate. This Wolinella succinogenes (strain ATCC 29543 / DSM 1740 / CCUG 13145 / JCM 31913 / LMG 7466 / NCTC 11488 / FDC 602W) (Vibrio succinogenes) protein is Formate-dependent phosphoribosylglycinamide formyltransferase.